We begin with the raw amino-acid sequence, 64 residues long: Large ribosomal subunit protein uL29 (64 aa).

This sequence belongs to the universal ribosomal protein uL29 family.

This Dichelobacter nodosus (strain VCS1703A) protein is Large ribosomal subunit protein uL29.